The following is a 379-amino-acid chain: Protein OSCP1 (379 aa).

In terms of tissue distribution, predominantly expressed in testis.

It localises to the basal cell membrane. In terms of biological role, may be involved in drug clearance in the placenta. The polypeptide is Protein OSCP1 (Oscp1) (Rattus norvegicus (Rat)).